Reading from the N-terminus, the 331-residue chain is Ribosomal RNA small subunit methyltransferase H (331 aa).

S-adenosyl-L-methionine-binding positions include 39–41 (GGY), Asp-56, Phe-83, Asp-100, and Gln-107.

It belongs to the methyltransferase superfamily. RsmH family.

It localises to the cytoplasm. The enzyme catalyses cytidine(1402) in 16S rRNA + S-adenosyl-L-methionine = N(4)-methylcytidine(1402) in 16S rRNA + S-adenosyl-L-homocysteine + H(+). Functionally, specifically methylates the N4 position of cytidine in position 1402 (C1402) of 16S rRNA. In Bartonella bacilliformis (strain ATCC 35685 / KC583 / Herrer 020/F12,63), this protein is Ribosomal RNA small subunit methyltransferase H.